The following is a 174-amino-acid chain: Shikimate kinase (174 aa).

An ATP-binding site is contributed by 14–19; the sequence is GAGKST. Ser18 lines the Mg(2+) pocket. Residues Asp36, Arg60, and Gly82 each coordinate substrate. Position 120 (Arg120) interacts with ATP. Arg139 serves as a coordination point for substrate. Gln156 is an ATP binding site.

The protein belongs to the shikimate kinase family. As to quaternary structure, monomer. Mg(2+) serves as cofactor.

It is found in the cytoplasm. The enzyme catalyses shikimate + ATP = 3-phosphoshikimate + ADP + H(+). It functions in the pathway metabolic intermediate biosynthesis; chorismate biosynthesis; chorismate from D-erythrose 4-phosphate and phosphoenolpyruvate: step 5/7. In terms of biological role, catalyzes the specific phosphorylation of the 3-hydroxyl group of shikimic acid using ATP as a cosubstrate. This chain is Shikimate kinase, found in Vibrio cholerae serotype O1 (strain ATCC 39541 / Classical Ogawa 395 / O395).